A 1325-amino-acid chain; its full sequence is Bile salt export pump (1325 aa).

Topologically, residues 1–62 are cytoplasmic; the sequence is MSDAVILRSV…FSSTTDIWLM (62 aa). An ABC transmembrane type-1 1 domain is found at 62-385; the sequence is MFVGSLCAFL…ASSCLEAFAT (324 aa). A helical membrane pass occupies residues 63–83; sequence FVGSLCAFLHGLSHPGVLLIF. Residues 84–147 lie on the Extracellular side of the membrane; that stretch reads GTMTDVFIAY…MIKFASYYAG (64 aa). N-linked (GlcNAc...) asparagine glycans are attached at residues Asn-109, Asn-116, Asn-122, and Asn-125. Residues 148–168 traverse the membrane as a helical segment; it reads IALLVLITGYIQICFWVIAAA. The Cytoplasmic segment spans residues 169–240; sequence RQIQKMRKIS…FLLGFYQGWK (72 aa). Residues 241–261 form a helical membrane-spanning segment; the sequence is LTLVIISVSPLIGIGAAIIGL. Over 262–319 the chain is Extracellular; the sequence is SVSKFTDYELKAYAKAGSVADEVISSMRTVAAFGGEKKEVERYEKNLVFAQRWGIRKG. A helical transmembrane segment spans residues 320-340; it reads IVMGFFTGFMWCLIFLCYALA. Residues 341–353 lie on the Cytoplasmic side of the membrane; that stretch reads FWYGSKLVLEDGE. A helical membrane pass occupies residues 354–374; it reads YTAGTLVQIFLSILLGALNLG. N-linked (GlcNAc...) asparagine glycosylation is found at Asn-375, Asn-424, and Asn-440. At 375 to 759 the chain is on the extracellular side; it reads NASSCLEAFA…KFNAPEWPYM (385 aa). One can recognise an ABC transporter 1 domain in the interval 420–656; it reads IEFHNVTFHY…KGVYFTLVTL (237 aa). Residue 455–462 coordinates ATP; it reads GSSGSGKS. Asn-591 carries an N-linked (GlcNAc...) asparagine glycan. Residues 759–1047 form the ABC transmembrane type-1 2 domain; sequence MLFGAVGAAV…ASSYTPSYAK (289 aa). A helical membrane pass occupies residues 760–780; sequence LFGAVGAAVNGSVTPLYAFLF. Topologically, residues 781–798 are cytoplasmic; the sequence is SQILGTFSLPDKEEQRSQ. The helical transmembrane segment at 799–819 threads the bilayer; that stretch reads INGVCLLFVAVGCVSLCTQFL. The Extracellular portion of the chain corresponds to 820-894; that stretch reads QGYAFAKSGE…NSFTNVTVAM (75 aa). Asn-889 is a glycosylation site (N-linked (GlcNAc...) asparagine). The helical transmembrane segment at 895–915 threads the bilayer; sequence IIAFFFSWKLSLVIMCFFPFL. Residues 916-983 are Cytoplasmic-facing; it reads ALSGALQTRM…PFKTAFRKAN (68 aa). Residues 984-1004 traverse the membrane as a helical segment; that stretch reads VYGFCFGFSQCIVFVANSASY. Topologically, residues 1005–1014 are extracellular; that stretch reads RYGGYLIPNE. Residues 1015–1035 traverse the membrane as a helical segment; the sequence is GLHFSYVFRVISSVVLSATAL. Residues 1036–1325 lie on the Cytoplasmic side of the membrane; that stretch reads GRASSYTPSY…KLVTTGAPIS (290 aa). The 239-residue stretch at 1082-1320 folds into the ABC transporter 2 domain; that stretch reads VDFVDCKFTY…KGAYYKLVTT (239 aa). 1117 to 1124 is an ATP binding site; that stretch reads GSSGCGKS.

Belongs to the ABC transporter superfamily. ABCB family. Multidrug resistance exporter (TC 3.A.1.201) subfamily. In terms of assembly, interacts with HAX1. Interacts with the adapter protein complex 2 (AP-2) throught AP2A2 or AP2A1; this interaction regulates cell membrane expression of ABCB11 through its internalization in a clathrin-dependent manner and its subsequent degradation. N-glycosylated. In terms of processing, ubiquitinated; short-chain ubiquitination regulates cell-Surface expression of ABCB11. Liver.

It localises to the apical cell membrane. The protein localises to the recycling endosome membrane. The protein resides in the endosome. It is found in the cell membrane. The catalysed reaction is cholate(in) + ATP + H2O = cholate(out) + ADP + phosphate + H(+). The enzyme catalyses taurocholate(in) + ATP + H2O = taurocholate(out) + ADP + phosphate + H(+). It catalyses the reaction glycocholate(in) + ATP + H2O = glycocholate(out) + ADP + phosphate + H(+). It carries out the reaction glycochenodeoxycholate(in) + ATP + H2O = glycochenodeoxycholate(out) + ADP + phosphate + H(+). The catalysed reaction is taurochenodeoxycholate(in) + ATP + H2O = taurochenodeoxycholate(out) + ADP + phosphate + H(+). The enzyme catalyses glycoursodeoxycholate(in) + ATP + H2O = glycoursodeoxycholate(out) + ADP + phosphate + H(+). It catalyses the reaction tauroursodeoxycholate(in) + ATP + H2O = tauroursodeoxycholate(out) + ADP + phosphate + H(+). It carries out the reaction taurodeoxycholate(in) + ATP + H2O = taurodeoxycholate(out) + ADP + phosphate + H(+). The catalysed reaction is taurolithocholate 3-sulfate(in) + ATP + H2O = taurolithocholate 3-sulfate(out) + ADP + phosphate + H(+). The enzyme catalyses pravastatin(in) + ATP + H2O = pravastatin(out) + ADP + phosphate + H(+). With respect to regulation, the uptake of taurocholate is inhibited by taurolithocholate sulfate with an IC(50) of 9 uM. Pravastatin competitively inhibits the transport of taurocholic acid. Cyclosporin A, glibenclamide, rifampicin and troglitazonestrongly competitively inhibit the transport activity of taurocholate. The canalicular transport activity of taurocholate is strongly dependent on canalicular membrane cholesterol content. The uptake of taurocholate is increased by short- and medium-chain fatty acids. Cholesterol increases transport capacity of taurocholate without affecting the affinity for the substrate. Functionally, catalyzes the transport of the major hydrophobic bile salts, such as taurine and glycine-conjugated cholic acid across the canalicular membrane of hepatocytes in an ATP-dependent manner, therefore participates in hepatic bile acid homeostasis and consequently to lipid homeostasis through regulation of biliary lipid secretion in a bile salts dependent manner. Transports taurine-conjugated bile salts more rapidly than glycine-conjugated bile salts. Also transports non-bile acid compounds, such as pravastatin and fexofenadine in an ATP-dependent manner and may be involved in their biliary excretion. The sequence is that of Bile salt export pump from Canis lupus familiaris (Dog).